Consider the following 1422-residue polypeptide: DNA-directed RNA polymerase subunit beta (1422 aa).

Residues 1392–1422 (QAAREAAERDLGGGPLGAPRGAVASGEKSSA) are disordered.

It belongs to the RNA polymerase beta chain family. In terms of assembly, the RNAP catalytic core consists of 2 alpha, 1 beta, 1 beta' and 1 omega subunit. When a sigma factor is associated with the core the holoenzyme is formed, which can initiate transcription.

It catalyses the reaction RNA(n) + a ribonucleoside 5'-triphosphate = RNA(n+1) + diphosphate. In terms of biological role, DNA-dependent RNA polymerase catalyzes the transcription of DNA into RNA using the four ribonucleoside triphosphates as substrates. This chain is DNA-directed RNA polymerase subunit beta, found in Anaeromyxobacter dehalogenans (strain 2CP-1 / ATCC BAA-258).